Consider the following 1086-residue polypeptide: Sterol regulatory element-binding protein cleavage-activating protein (1086 aa).

Residues methionine 1–proline 35 lie on the Cytoplasmic side of the membrane. Residues tryptophan 36 to alanine 56 traverse the membrane as a helical segment. The Lumenal segment spans residues tyrosine 57–threonine 229. N-linked (GlcNAc...) asparagine glycans are attached at residues asparagine 94 and asparagine 168. Residues valine 230–leucine 250 form a helical membrane-spanning segment. The SSD domain occupies arginine 233–valine 391. Topologically, residues serine 251–threonine 265 are cytoplasmic. A helical membrane pass occupies residues alanine 266–phenylalanine 286. The Lumenal portion of the chain corresponds to glutamate 287–glycine 290. The chain crosses the membrane as a helical span at residues proline 291 to phenylalanine 311. At arginine 312–threonine 337 the chain is on the cytoplasmic side. Residues isoleucine 338 to phenylalanine 358 form a helical membrane-spanning segment. Topologically, residues valine 359–cysteine 367 are lumenal. Residues leucine 368–valine 388 traverse the membrane as a helical segment. Over leucine 389 to arginine 422 the chain is Cytoplasmic. The ER export signal motif lies at leucine 396–phenylalanine 401. A helical membrane pass occupies residues phenylalanine 423–isoleucine 443. At tyrosine 444–serine 544 the chain is on the lumenal side. Asparagine 454 carries an N-linked (GlcNAc...) asparagine glycan. Residues threonine 545 to leucine 565 form a helical membrane-spanning segment. Over arginine 566–cysteine 1086 the chain is Cytoplasmic. WD repeat units lie at residues histidine 593–valine 632, glutamine 637–glutamine 675, cysteine 680–aspartate 727, leucine 736–lysine 776, and glycine 963–arginine 1009. An interaction with sre1 region spans residues arginine 640–cysteine 1086.

The protein belongs to the WD repeat SCAP family. Forms a tight complex with scp1, composed of 4 copies of scp1 and 4 copies of sre1.

The protein localises to the endoplasmic reticulum membrane. The protein resides in the golgi apparatus membrane. Its function is as follows. Escort protein required for sre1 processing at low sterol as well as oxygen levels. May regulate export of the scp1/sre1 complex from the ER at low sterol or oxygen levels. 4-methyl sterols bound to scp1 may mask an ER export signal in scp1 leading to retention of the complex in the ER. Release of 4-methyl sterols may trigger a conformational change in the SSD domain of scp1 unmasking the ER export signal leading to recruitment into COPII-coated vesicles, transport to the Golgi complex, proteolytic cleavage of sre1 in the Golgi, release of the transcription factor fragment of sre1 from the membrane, its import into the nucleus and up-regulation of genes required for ergosterol biosynthesis as well as anaerobic growth. Binds 4-methyl sterols. The protein is Sterol regulatory element-binding protein cleavage-activating protein of Schizosaccharomyces pombe (strain 972 / ATCC 24843) (Fission yeast).